Here is a 193-residue protein sequence, read N- to C-terminus: Naphthalene 1,2-dioxygenase system, small oxygenase component (193 aa).

The protein belongs to the bacterial ring-hydroxylating dioxygenase beta subunit family. As to quaternary structure, the naphthalene dioxygenase (NDO) multicomponent enzyme system is composed of an electron transfer component and a dioxygenase component (iron sulfur protein (ISP)). The electron transfer component is composed of a ferredoxin reductase (NdoR) and a ferredoxin (NdoA), and the dioxygenase component is formed of a heterohexamer (trimer of heterodimers) of three large alpha subunits (NdoB) and three small beta subunits (NdoC).

The protein operates within aromatic compound metabolism; naphthalene degradation. Its function is as follows. Component of the naphthalene dioxygenase (NDO) multicomponent enzyme system which catalyzes the incorporation of both atoms of molecular oxygen into naphthalene to form cis-(1R,2S)-dihydroxy-1,2-dihydronaphthalene. The beta subunit seems to have a structural role in the holoenzyme. The sequence is that of Naphthalene 1,2-dioxygenase system, small oxygenase component from Pseudomonas aeruginosa.